The primary structure comprises 164 residues: ATP synthase subunit b (164 aa).

Residues 6–26 (GELVGNFILVTGSVIVLLLLI) form a helical membrane-spanning segment.

Belongs to the ATPase B chain family. In terms of assembly, F-type ATPases have 2 components, F(1) - the catalytic core - and F(0) - the membrane proton channel. F(1) has five subunits: alpha(3), beta(3), gamma(1), delta(1), epsilon(1). F(0) has three main subunits: a(1), b(2) and c(10-14). The alpha and beta chains form an alternating ring which encloses part of the gamma chain. F(1) is attached to F(0) by a central stalk formed by the gamma and epsilon chains, while a peripheral stalk is formed by the delta and b chains.

The protein localises to the cell membrane. Functionally, f(1)F(0) ATP synthase produces ATP from ADP in the presence of a proton or sodium gradient. F-type ATPases consist of two structural domains, F(1) containing the extramembraneous catalytic core and F(0) containing the membrane proton channel, linked together by a central stalk and a peripheral stalk. During catalysis, ATP synthesis in the catalytic domain of F(1) is coupled via a rotary mechanism of the central stalk subunits to proton translocation. In terms of biological role, component of the F(0) channel, it forms part of the peripheral stalk, linking F(1) to F(0). This is ATP synthase subunit b from Streptococcus pyogenes serotype M12 (strain MGAS2096).